The following is a 187-amino-acid chain: Elongation factor P (187 aa).

Belongs to the elongation factor P family.

The protein resides in the cytoplasm. Its pathway is protein biosynthesis; polypeptide chain elongation. Functionally, involved in peptide bond synthesis. Stimulates efficient translation and peptide-bond synthesis on native or reconstituted 70S ribosomes in vitro. Probably functions indirectly by altering the affinity of the ribosome for aminoacyl-tRNA, thus increasing their reactivity as acceptors for peptidyl transferase. The polypeptide is Elongation factor P (Desulfosudis oleivorans (strain DSM 6200 / JCM 39069 / Hxd3) (Desulfococcus oleovorans)).